The sequence spans 191 residues: Putative glutathione-dependent formaldehyde-activating enzyme (191 aa).

The CENP-V/GFA domain occupies 20-166 (FPGGNLYCLC…FQSLGLQTYD (147 aa)). 7 residues coordinate Zn(2+): cysteine 27, cysteine 29, cysteine 48, cysteine 50, cysteine 53, cysteine 95, and cysteine 98.

The protein belongs to the Gfa family. Zn(2+) serves as cofactor.

It carries out the reaction S-(hydroxymethyl)glutathione = glutathione + formaldehyde. Its pathway is one-carbon metabolism; formaldehyde degradation; formate from formaldehyde (glutathione route): step 1/3. In terms of biological role, catalyzes the condensation of formaldehyde and glutathione to S-hydroxymethylglutathione. The protein is Putative glutathione-dependent formaldehyde-activating enzyme of Aspergillus flavus (strain ATCC 200026 / FGSC A1120 / IAM 13836 / NRRL 3357 / JCM 12722 / SRRC 167).